Reading from the N-terminus, the 227-residue chain is ATP-dependent dethiobiotin synthetase BioD (227 aa).

Residue 13–18 (DVGKTV) participates in ATP binding. T17 serves as a coordination point for Mg(2+). The active site involves K38. ATP is bound by residues D55, 116-119 (EGAG), 176-177 (NR), and 205-207 (PYI). Mg(2+)-binding residues include D55 and E116.

The protein belongs to the dethiobiotin synthetase family. Homodimer. Requires Mg(2+) as cofactor.

Its subcellular location is the cytoplasm. It catalyses the reaction (7R,8S)-7,8-diammoniononanoate + CO2 + ATP = (4R,5S)-dethiobiotin + ADP + phosphate + 3 H(+). It participates in cofactor biosynthesis; biotin biosynthesis; biotin from 7,8-diaminononanoate: step 1/2. In terms of biological role, catalyzes a mechanistically unusual reaction, the ATP-dependent insertion of CO2 between the N7 and N8 nitrogen atoms of 7,8-diaminopelargonic acid (DAPA, also called 7,8-diammoniononanoate) to form a ureido ring. The polypeptide is ATP-dependent dethiobiotin synthetase BioD (Vibrio campbellii (strain ATCC BAA-1116)).